A 593-amino-acid polypeptide reads, in one-letter code: NADH-quinone oxidoreductase subunit C/D (593 aa).

The interval 1-184 is NADH dehydrogenase I subunit C; that stretch reads MTADNAIFIP…DPYSLTLAKQ (184 aa). The tract at residues 208-593 is NADH dehydrogenase I subunit D; it reads DYMFLNLGPN…IDFVMADVDR (386 aa).

It in the N-terminal section; belongs to the complex I 30 kDa subunit family. The protein in the C-terminal section; belongs to the complex I 49 kDa subunit family. In terms of assembly, NDH-1 is composed of 13 different subunits. Subunits NuoB, CD, E, F, and G constitute the peripheral sector of the complex.

The protein localises to the cell inner membrane. It catalyses the reaction a quinone + NADH + 5 H(+)(in) = a quinol + NAD(+) + 4 H(+)(out). NDH-1 shuttles electrons from NADH, via FMN and iron-sulfur (Fe-S) centers, to quinones in the respiratory chain. The immediate electron acceptor for the enzyme in this species is believed to be ubiquinone. Couples the redox reaction to proton translocation (for every two electrons transferred, four hydrogen ions are translocated across the cytoplasmic membrane), and thus conserves the redox energy in a proton gradient. This is NADH-quinone oxidoreductase subunit C/D from Pseudomonas putida (strain W619).